Consider the following 503-residue polypeptide: Probable cytosol aminopeptidase (503 aa).

Mn(2+) contacts are provided by lysine 270 and aspartate 275. Lysine 282 is an active-site residue. Mn(2+)-binding residues include aspartate 293, aspartate 352, and glutamate 354. Arginine 356 is an active-site residue.

It belongs to the peptidase M17 family. Mn(2+) serves as cofactor.

The protein resides in the cytoplasm. It catalyses the reaction Release of an N-terminal amino acid, Xaa-|-Yaa-, in which Xaa is preferably Leu, but may be other amino acids including Pro although not Arg or Lys, and Yaa may be Pro. Amino acid amides and methyl esters are also readily hydrolyzed, but rates on arylamides are exceedingly low.. The enzyme catalyses Release of an N-terminal amino acid, preferentially leucine, but not glutamic or aspartic acids.. Its function is as follows. Presumably involved in the processing and regular turnover of intracellular proteins. Catalyzes the removal of unsubstituted N-terminal amino acids from various peptides. In Salmonella typhi, this protein is Probable cytosol aminopeptidase.